A 109-amino-acid chain; its full sequence is Ferredoxin (109 aa).

2 4Fe-4S ferredoxin-type domains span residues 2–30 (TYVVNDECVKCKYTDCVDVCPVDCFYEGE) and 31–60 (FMLVINPDECIDCGVCVPDCPIDAIKPESP). Residues C9 and C17 each contribute to the [3Fe-4S] cluster site. Residues C21, C40, C43, and C46 each coordinate [4Fe-4S] cluster. C50 contacts [3Fe-4S] cluster.

[4Fe-4S] cluster is required as a cofactor. [3Fe-4S] cluster serves as cofactor.

Functionally, ferredoxins are iron-sulfur proteins that transfer electrons in a wide variety of metabolic reactions. The polypeptide is Ferredoxin (fdxA) (Rickettsia felis (strain ATCC VR-1525 / URRWXCal2) (Rickettsia azadi)).